We begin with the raw amino-acid sequence, 104 residues long: Large ribosomal subunit protein uL24 (104 aa).

Belongs to the universal ribosomal protein uL24 family. In terms of assembly, part of the 50S ribosomal subunit.

In terms of biological role, one of two assembly initiator proteins, it binds directly to the 5'-end of the 23S rRNA, where it nucleates assembly of the 50S subunit. One of the proteins that surrounds the polypeptide exit tunnel on the outside of the subunit. The protein is Large ribosomal subunit protein uL24 of Pseudomonas aeruginosa (strain LESB58).